We begin with the raw amino-acid sequence, 446 residues long: NADH-dependent phenylglyoxylate dehydrogenase subunit beta (446 aa).

4 consecutive 4Fe-4S ferredoxin-type domains span residues 6-35 (STIA…TDDI), 49-80 (ADKT…KDGT), 82-111 (GVIG…LDEA), and 109-141 (DEAT…HITT).

Dimer of heteropentamers composed of an alpha (PadG), a beta (PadI), a gamma (PadE), a delta (PadF) and an epsilon (PadH) subunit. It depends on [4Fe-4S] cluster as a cofactor.

It carries out the reaction phenylglyoxylate + NAD(+) + CoA = benzoyl-CoA + CO2 + NADH. Its activity is regulated as follows. Activated by magnesium ions and thiamine diphosphate. Involved in the anaerobic metabolism of phenylalanine and phenylacetate. Catalyzes the oxidative decarboxylation of phenylglyoxylate to benzoyl-CoA and CO(2). It can also react slowly with 2-oxo-3-methylbutanoate and use different electron acceptors such as benzyl viologen, methyl viologen, FAD or FMN, but NAD seems to be the physiological electron acceptor. Also catalyzes an isotope exchange between CO(2) and the carboxyl group which proves partial or complete reversibility of the oxidative decarboxylation reaction. The chain is NADH-dependent phenylglyoxylate dehydrogenase subunit beta (padI) from Aromatoleum evansii (Azoarcus evansii).